Consider the following 253-residue polypeptide: Phosphate import ATP-binding protein PstB (253 aa).

An ABC transporter domain is found at 7-248 (IDARDVNFWY…PEKEATQNYI (242 aa)). 39-46 (GPSGCGKS) is an ATP binding site.

Belongs to the ABC transporter superfamily. Phosphate importer (TC 3.A.1.7) family. In terms of assembly, the complex is composed of two ATP-binding proteins (PstB), two transmembrane proteins (PstC and PstA) and a solute-binding protein (PstS).

It localises to the cell inner membrane. It catalyses the reaction phosphate(out) + ATP + H2O = ADP + 2 phosphate(in) + H(+). In terms of biological role, part of the ABC transporter complex PstSACB involved in phosphate import. Responsible for energy coupling to the transport system. The protein is Phosphate import ATP-binding protein PstB of Bacteroides fragilis (strain ATCC 25285 / DSM 2151 / CCUG 4856 / JCM 11019 / LMG 10263 / NCTC 9343 / Onslow / VPI 2553 / EN-2).